The chain runs to 140 residues: uncharacterized protein (140 aa).

Tandem repeats lie at residues 1–10 (MFARLCPVSE), 11–20 (TFGRLCPVSE), 21–30 (TFARLCPVSE), 31–40 (TFARLCPVSE), 41–50 (TFARLCPVSE), 51–60 (TFGRLCPVSE), 61–70 (MFGRLSPVSE), 71–80 (TFGRLCPVSE), 81–90 (TFGRLCPVSE), 91–100 (MFARLCPVSE), 101–110 (TFGRLSPVSE), 111–120 (MFGRLCPVSE), 121–130 (MFGRLCPVSE), and 131–140 (MFGRLCPVIT). The tract at residues 1-140 (MFARLCPVSE…MFGRLCPVIT (140 aa)) is 14 X 10 AA tandem repeats of [MT]-F-[AG]-R-L-[CS]-P-V-[SI]-[ET].

This is an uncharacterized protein from Homo sapiens (Human).